We begin with the raw amino-acid sequence, 355 residues long: UDP-3-O-acylglucosamine N-acyltransferase (355 aa).

H258 serves as the catalytic Proton acceptor.

The protein belongs to the transferase hexapeptide repeat family. LpxD subfamily. As to quaternary structure, homotrimer.

The enzyme catalyses a UDP-3-O-[(3R)-3-hydroxyacyl]-alpha-D-glucosamine + a (3R)-hydroxyacyl-[ACP] = a UDP-2-N,3-O-bis[(3R)-3-hydroxyacyl]-alpha-D-glucosamine + holo-[ACP] + H(+). Its pathway is bacterial outer membrane biogenesis; LPS lipid A biosynthesis. Functionally, catalyzes the N-acylation of UDP-3-O-acylglucosamine using 3-hydroxyacyl-ACP as the acyl donor. Is involved in the biosynthesis of lipid A, a phosphorylated glycolipid that anchors the lipopolysaccharide to the outer membrane of the cell. This is UDP-3-O-acylglucosamine N-acyltransferase from Agrobacterium fabrum (strain C58 / ATCC 33970) (Agrobacterium tumefaciens (strain C58)).